Reading from the N-terminus, the 616-residue chain is Large ribosomal subunit assembly factor BipA (616 aa).

One can recognise a tr-type G domain in the interval 8-204 (KKLRNIAIIA…AIVKHVEPPK (197 aa)). Residues 20-25 (DHGKTT) and 134-137 (NKVD) each bind GTP.

This sequence belongs to the TRAFAC class translation factor GTPase superfamily. Classic translation factor GTPase family. BipA subfamily. As to quaternary structure, monomer.

It is found in the cytoplasm. It carries out the reaction GTP + H2O = GDP + phosphate + H(+). Its function is as follows. A 50S ribosomal subunit assembly protein with GTPase activity, required for 50S subunit assembly at low temperatures, may also play a role in translation. Binds GTP and analogs. Binds the 70S ribosome between the 30S and 50S subunits, in a similar position as ribosome-bound EF-G; it contacts a number of ribosomal proteins, both rRNAs and the A-site tRNA. The protein is Large ribosomal subunit assembly factor BipA of Haemophilus influenzae (strain ATCC 51907 / DSM 11121 / KW20 / Rd).